We begin with the raw amino-acid sequence, 154 residues long: Ribonuclease 8 (154 aa).

The first 27 residues, 1-27 (MAPARAGCCPLLLLLLGLWVAEVLVRA), serve as a signal peptide directing secretion. The active-site Proton acceptor is the histidine 42. Cystine bridges form between cysteine 50–cysteine 93, cysteine 64–cysteine 118, cysteine 82–cysteine 133, and cysteine 89–cysteine 96. Residues 65–69 (KDLNT) and lysine 90 contribute to the substrate site. The active-site Proton donor is the histidine 149.

It belongs to the pancreatic ribonuclease family. As to expression, expressed prominently in the placenta and is not detected in any other tissues examined.

The protein resides in the secreted. Has a low ribonuclease activity. This is Ribonuclease 8 (RNASE8) from Homo sapiens (Human).